A 122-amino-acid chain; its full sequence is Large ribosomal subunit protein uL14 (122 aa).

It belongs to the universal ribosomal protein uL14 family. In terms of assembly, part of the 50S ribosomal subunit. Forms a cluster with proteins L3 and L19. In the 70S ribosome, L14 and L19 interact and together make contacts with the 16S rRNA in bridges B5 and B8.

Binds to 23S rRNA. Forms part of two intersubunit bridges in the 70S ribosome. This chain is Large ribosomal subunit protein uL14, found in Rhodopseudomonas palustris (strain HaA2).